The primary structure comprises 665 residues: Methionine--tRNA ligase (665 aa).

Positions 13-23 (YYPSGKLHIGS) match the 'HIGH' region motif. A 'KMSKS' region motif is present at residues 309–313 (KMSKS). Lys312 provides a ligand contact to ATP. One can recognise a tRNA-binding domain in the interval 562–665 (DFDKVEIRVA…PAVPNGSVIG (104 aa)).

It belongs to the class-I aminoacyl-tRNA synthetase family. MetG type 2B subfamily. In terms of assembly, homodimer.

It is found in the cytoplasm. It catalyses the reaction tRNA(Met) + L-methionine + ATP = L-methionyl-tRNA(Met) + AMP + diphosphate. Is required not only for elongation of protein synthesis but also for the initiation of all mRNA translation through initiator tRNA(fMet) aminoacylation. In Streptococcus pneumoniae serotype 4 (strain ATCC BAA-334 / TIGR4), this protein is Methionine--tRNA ligase (metG).